Reading from the N-terminus, the 131-residue chain is Biogenesis of lysosome-related organelles complex 1 subunit 5 (131 aa).

It belongs to the BLOC1S5 family. As to quaternary structure, component of the biogenesis of lysosome-related organelles complex-1 (BLOC-1) composed at least of blos-1, blos-2, blos-4, dsbn-1, glo-2, mutd-1 and snpn-1.

Its function is as follows. Component of the biogenesis of lysosome-related organelles complex-1 (BLOC-1) involved in gut granule biogenesis. The polypeptide is Biogenesis of lysosome-related organelles complex 1 subunit 5 (mutd-1) (Caenorhabditis elegans).